Reading from the N-terminus, the 197-residue chain is Phosphoheptose isomerase (197 aa).

The SIS domain occupies Cys-40 to Gln-197. Asn-55–Gly-57 contacts substrate. 2 residues coordinate Zn(2+): His-64 and Glu-68. Substrate is bound by residues Glu-68, Asn-97–Asp-98, Ser-123–Ser-125, Ser-128, and Gln-175. Zn(2+)-binding residues include Gln-175 and His-183.

This sequence belongs to the SIS family. GmhA subfamily. In terms of assembly, homotetramer. The cofactor is Zn(2+).

Its subcellular location is the cytoplasm. It catalyses the reaction 2 D-sedoheptulose 7-phosphate = D-glycero-alpha-D-manno-heptose 7-phosphate + D-glycero-beta-D-manno-heptose 7-phosphate. It functions in the pathway carbohydrate biosynthesis; D-glycero-D-manno-heptose 7-phosphate biosynthesis; D-glycero-alpha-D-manno-heptose 7-phosphate and D-glycero-beta-D-manno-heptose 7-phosphate from sedoheptulose 7-phosphate: step 1/1. It participates in capsule biogenesis; capsule polysaccharide biosynthesis. In terms of biological role, catalyzes the isomerization of sedoheptulose 7-phosphate in D-glycero-D-manno-heptose 7-phosphate. This is Phosphoheptose isomerase from Burkholderia mallei (strain ATCC 23344).